The primary structure comprises 393 residues: Isocitrate dehydrogenase [NADP] (393 aa).

Positions 102, 104, 108, 118, and 142 each coordinate D-threo-isocitrate. A Mg(2+)-binding site is contributed by Asp-283.

It belongs to the isocitrate and isopropylmalate dehydrogenases family. Homodimer. Mg(2+) serves as cofactor. Requires Mn(2+) as cofactor.

The catalysed reaction is D-threo-isocitrate + NADP(+) = 2-oxoglutarate + CO2 + NADPH. In terms of biological role, catalyzes the oxidative decarboxylation of isocitrate to 2-oxoglutarate and carbon dioxide with the concomitant reduction of NADP(+). This chain is Isocitrate dehydrogenase [NADP] (icd), found in Streptococcus mutans serotype c (strain ATCC 700610 / UA159).